Reading from the N-terminus, the 43-residue chain is Cytochrome b559 subunit beta (43 aa).

The chain crosses the membrane as a helical span at residues 18–34 (WLAVHGLAIPTVFFLGG). Histidine 22 is a heme binding site.

The protein belongs to the PsbE/PsbF family. Heterodimer of an alpha subunit and a beta subunit. PSII is composed of 1 copy each of membrane proteins PsbA, PsbB, PsbC, PsbD, PsbE, PsbF, PsbH, PsbI, PsbJ, PsbK, PsbL, PsbM, PsbT, PsbX, PsbY, PsbZ, Psb30/Ycf12, at least 3 peripheral proteins of the oxygen-evolving complex and a large number of cofactors. It forms dimeric complexes. Heme b is required as a cofactor.

The protein localises to the plastid. Its subcellular location is the chloroplast thylakoid membrane. Its function is as follows. This b-type cytochrome is tightly associated with the reaction center of photosystem II (PSII). PSII is a light-driven water:plastoquinone oxidoreductase that uses light energy to abstract electrons from H(2)O, generating O(2) and a proton gradient subsequently used for ATP formation. It consists of a core antenna complex that captures photons, and an electron transfer chain that converts photonic excitation into a charge separation. In Thalassiosira pseudonana (Marine diatom), this protein is Cytochrome b559 subunit beta.